The following is a 423-amino-acid chain: RRVPLLLLGILFLASLSASFAISLREHNESQDNPFYFSSDNSWQTLFKNQYGHIRVLQRFDQRSERLQNLEDYRLVEFMSKPETLLLPQQADAEFLLVVRSGSALLALVKPGGTIIYSLKQQDTLKIPAGTIFFLINPENNEDLRIIKLAMTVNNPQIQDFFLSSTEAQQSYLYGFSKHILDASFNSPIEKINRLLFAEEGRQEGVIVNIGSDLIQELSRHAKSSSRKSLDHNSLDISNEWGNLTDIVYNSLDVLLTYVEIKEGGLFVPHYNSKAIVILVVEEGVAKVELVGPKREKESLELETYRADVSEGDVFVIPAAFPFAIKAISNVNFTSFGINANNNYRIFLTGKGGPTGKEDNIISAGINPDVLGLMFPGSGEDVQKLFNNQNLSHFVNGSYHKNAHPHEQEQQKQQKGRKGAFVY.

The signal sequence occupies residues 1–21 (RRVPLLLLGILFLASLSASFA). N28 carries N-linked (GlcNAc...) asparagine glycosylation. Cupin type-1 domains lie at 35–193 (FYFS…EKIN) and 228–383 (KSLD…EDVQ). 4 N-linked (GlcNAc...) asparagine glycosylation sites follow: N243, N332, N390, and N396. Residues 397–423 (GSYHKNAHPHEQEQQKQQKGRKGAFVY) are disordered. Over residues 414 to 423 (QKGRKGAFVY) the composition is skewed to basic residues.

This sequence belongs to the 7S seed storage protein family. As to quaternary structure, homotrimer.

The protein resides in the vacuole. It localises to the aleurone grain. In terms of biological role, major seed storage protein. In Phaseolus lunatus (Lima bean), this protein is Phaseolin (PHS).